Consider the following 247-residue polypeptide: Sulfate transporter CysZ (247 aa).

5 helical membrane-spanning segments follow: residues Phe29 to Phe49, Phe66 to Phe86, Leu141 to Leu160, Val164 to Phe186, and Val212 to Ile232.

This sequence belongs to the CysZ family.

It is found in the cell inner membrane. High affinity, high specificity proton-dependent sulfate transporter, which mediates sulfate uptake. Provides the sulfur source for the cysteine synthesis pathway. This chain is Sulfate transporter CysZ, found in Vibrio parahaemolyticus serotype O3:K6 (strain RIMD 2210633).